Reading from the N-terminus, the 429-residue chain is MAAIVIVGAQWGDEGKGKATDILGGLVDYVVKPNGGNNAGHTVVVGGEKYELKLLPAGVLSETATPILGNGVVINLEALFEEIDGLEARGADASRLRISANAHLVAPYHQIMDRVQERFLGKRAIGTTGRGIGPTYQDKVGRVGIRVQDIFDESILRQKIESALDVKNQVLVKMYNRKAIVAEETVQYFLSYADRLRPMVIDATLELNKALDEGKHVLMEGGQATMLDVDHGTYPFVTSSNPTAGGACVGSGVGPTRITSTLGIIKAYTTRVGAGPFPTELFDKWGEYLQTVGGEVGVNTGRKRRCGWYDSVIARYASRVNGFTDYFLTKLDVLTGIGEIPICVAYEVDGVRHDEMPMTQSDFHHAKPIFETMPAWDEDITGCRTFEELPQKAQDYVRRLEELSGARFSYIGVGPGRDQTIVLHDVMES.

GTP is bound by residues 12–18 and 40–42; these read GDEGKGK and GHT. The active-site Proton acceptor is Asp13. 2 residues coordinate Mg(2+): Asp13 and Gly40. IMP is bound by residues 13 to 16, 38 to 41, Thr128, Arg142, Gln223, Thr238, and Arg302; these read DEGK and NAGH. His41 acts as the Proton donor in catalysis. 298 to 304 is a substrate binding site; sequence VNTGRKR. Residues Arg304, 330–332, and 412–414 each bind GTP; these read KLD and GVG.

It belongs to the adenylosuccinate synthetase family. Homodimer. Mg(2+) serves as cofactor.

The protein resides in the cytoplasm. The catalysed reaction is IMP + L-aspartate + GTP = N(6)-(1,2-dicarboxyethyl)-AMP + GDP + phosphate + 2 H(+). It participates in purine metabolism; AMP biosynthesis via de novo pathway; AMP from IMP: step 1/2. Functionally, plays an important role in the de novo pathway of purine nucleotide biosynthesis. Catalyzes the first committed step in the biosynthesis of AMP from IMP. The sequence is that of Adenylosuccinate synthetase from Corynebacterium efficiens (strain DSM 44549 / YS-314 / AJ 12310 / JCM 11189 / NBRC 100395).